The sequence spans 309 residues: Large ribosomal subunit protein mL45 (309 aa).

Belongs to the mitochondrion-specific ribosomal protein mL45 family. In terms of assembly, component of the mitochondrial ribosome large subunit (39S) which comprises a 16S rRNA and about 50 distinct proteins.

It localises to the mitochondrion. Its function is as follows. Component of the mitochondrial large ribosomal subunit (mt-LSU). Within the mitochondrial ribosomes, required to direct the nascent polypeptide toward the tunnel exit and position the exit at a distance from the membrane surface. The sequence is that of Large ribosomal subunit protein mL45 (mrpl45) from Xenopus tropicalis (Western clawed frog).